The primary structure comprises 264 residues: Thymidylate synthase (264 aa).

Residue Arg-21 coordinates dUMP. A (6R)-5,10-methylene-5,6,7,8-tetrahydrofolate-binding site is contributed by His-51. Residue 126-127 coordinates dUMP; it reads RR. Catalysis depends on Cys-146, which acts as the Nucleophile. DUMP contacts are provided by residues 166–169, Asn-177, and 207–209; these read RSCD and HLY. Asp-169 serves as a coordination point for (6R)-5,10-methylene-5,6,7,8-tetrahydrofolate. Ala-263 is a (6R)-5,10-methylene-5,6,7,8-tetrahydrofolate binding site.

The protein belongs to the thymidylate synthase family. Bacterial-type ThyA subfamily. In terms of assembly, homodimer.

The protein localises to the cytoplasm. The catalysed reaction is dUMP + (6R)-5,10-methylene-5,6,7,8-tetrahydrofolate = 7,8-dihydrofolate + dTMP. It participates in pyrimidine metabolism; dTTP biosynthesis. Catalyzes the reductive methylation of 2'-deoxyuridine-5'-monophosphate (dUMP) to 2'-deoxythymidine-5'-monophosphate (dTMP) while utilizing 5,10-methylenetetrahydrofolate (mTHF) as the methyl donor and reductant in the reaction, yielding dihydrofolate (DHF) as a by-product. This enzymatic reaction provides an intracellular de novo source of dTMP, an essential precursor for DNA biosynthesis. In Shewanella denitrificans (strain OS217 / ATCC BAA-1090 / DSM 15013), this protein is Thymidylate synthase.